The chain runs to 307 residues: Membrane protein insertase YidC 1 (307 aa).

The N-terminal stretch at 1 to 22 (MKSKKGLTLTITLGTLALFLSG) is a signal peptide. A lipid anchor (N-palmitoyl cysteine) is attached at Cys-23. Cys-23 carries S-diacylglycerol cysteine lipidation. 5 consecutive transmembrane segments (helical) span residues 59–79 (YGWAIIGLTVIVRLVLLPMMI), 136–156 (GIGCLPLLIQLPIFSALYYAI), 177–197 (LILAILAFLSYLAQGYLSMIG), 205–225 (TMRLMLIMSPVMILFVSMSAP), and 226–246 (AGLGLYFFVGGLFACLQTLII). The tract at residues 260-307 (ELKKHPIKTPTPTQPKPINATESKPSHPRPQNNAGRGRNAGKQQRHHK) is disordered.

This sequence belongs to the OXA1/ALB3/YidC family. Type 2 subfamily.

It is found in the cell membrane. Required for the insertion and/or proper folding and/or complex formation of integral membrane proteins into the membrane. Involved in integration of membrane proteins that insert both dependently and independently of the Sec translocase complex, as well as at least some lipoproteins. In Lactiplantibacillus plantarum (strain ATCC BAA-793 / NCIMB 8826 / WCFS1) (Lactobacillus plantarum), this protein is Membrane protein insertase YidC 1.